The sequence spans 370 residues: Histidinol-phosphate aminotransferase 1 (370 aa).

Position 222 is an N6-(pyridoxal phosphate)lysine (lysine 222).

Belongs to the class-II pyridoxal-phosphate-dependent aminotransferase family. Histidinol-phosphate aminotransferase subfamily. As to quaternary structure, homodimer. Pyridoxal 5'-phosphate is required as a cofactor.

The catalysed reaction is L-histidinol phosphate + 2-oxoglutarate = 3-(imidazol-4-yl)-2-oxopropyl phosphate + L-glutamate. Its pathway is amino-acid biosynthesis; L-histidine biosynthesis; L-histidine from 5-phospho-alpha-D-ribose 1-diphosphate: step 7/9. The protein is Histidinol-phosphate aminotransferase 1 (hisC1) of Bacillus cereus (strain ATCC 14579 / DSM 31 / CCUG 7414 / JCM 2152 / NBRC 15305 / NCIMB 9373 / NCTC 2599 / NRRL B-3711).